The chain runs to 95 residues: Parvalbumin alpha (95 aa).

Serine 19 carries the phosphoserine modification. 2 EF-hand domains span residues 34–69 and 73–95; these read KNRE…FSAD and LSDT…KIGA. 10 residues coordinate Ca(2+): aspartate 47, aspartate 49, serine 51, phenylalanine 53, glutamate 55, glutamate 58, aspartate 86, aspartate 88, aspartate 90, and lysine 92.

This sequence belongs to the parvalbumin family.

In terms of biological role, in muscle, parvalbumin is thought to be involved in relaxation after contraction. It binds two calcium ions. In Cavia porcellus (Guinea pig), this protein is Parvalbumin alpha (PVALB).